The sequence spans 898 residues: Netrin receptor UNC5A (898 aa).

The first 25 residues, 1-25 (MAVRPGLWPALLGIVLTAWLRGSGA), serve as a signal peptide directing secretion. The Extracellular portion of the chain corresponds to 26–361 (QQSATVANPV…TSSGPEDVAL (336 aa)). The 98-residue stretch at 44–141 (PHFLVEPEDV…SGTTKSQKAY (98 aa)) folds into the Ig-like domain. Cystine bridges form between C65-C126, C77-C124, and C170-C221. Residues N107 and N218 are each glycosylated (N-linked (GlcNAc...) asparagine). The Ig-like C2-type domain maps to 155–234 (PLAKEVSLEQ…NIVARRRSAS (80 aa)). 2 TSP type-1 domains span residues 242–296 (NGGW…TLCP) and 298–350 (DGSW…DLCL). W245, W248, and W251 each carry a C-linked (Man) tryptophan glycan. Disulfide bonds link C254–C291, C258–C295, and C269–C281. 2 C-linked (Man) tryptophan glycosylation sites follow: W301 and W304. Cystine bridges form between C310–C344, C314–C349, and C322–C334. An N-linked (GlcNAc...) asparagine glycan is attached at N343. The chain crosses the membrane as a helical span at residues 362 to 382 (YIGLVAVAVCLILLLLVLVLI). Residues 383-898 (YCRKKEGLDS…GLFTVSEAEC (516 aa)) are Cytoplasmic-facing. The ZU5 domain maps to 497–640 (NMAYGTFNFL…LGRFALVGEA (144 aa)). The interval 661–679 (SLEYNIRVYCLHDTHDALK) is interaction with DCC. Residues 817–897 (QKIITSLDPP…AGLFTVSEAE (81 aa)) form the Death domain.

Belongs to the unc-5 family. As to quaternary structure, homodimer and homooligomer. Interacts with the cytoplasmic part of DCC. Interacts with MAGED1. Interacts with PRKCABP, possibly mediating some interaction with PKC. Interacts (via extracellular domain) with FLRT2 (via extracellular domain). Interacts (via extracellular domain) with FLRT3 (via extracellular domain). In terms of processing, phosphorylated on cytoplasmic tyrosine residues. Phosphorylated by PKC in vitro. Post-translationally, proteolytically cleaved by caspases during apoptosis. The cleavage does not take place when the receptor is associated with netrin ligand. Its cleavage by caspases is required to induce apoptosis. The two extracellular TSRs of UNC5A contain WxxWxxWxxC motifs that can be C-mannosylated on all tryptophans. DPY19L1 preferentially mannosylates the first two tryptophans and DPY19L3 prefers the third. C-mannosylation by DPY19L1 is required for transport of UNC5A from the endoplasmic reticulum to the cell surface. As to expression, restricted to central nervous system.

The protein resides in the cell membrane. It is found in the membrane raft. It localises to the cell projection. Its subcellular location is the neuron projection. Receptor for netrin required for axon guidance. Functions in the netrin signaling pathway and promotes neurite outgrowth in response to NTN1. Mediates axon repulsion of neuronal growth cones in the developing nervous system in response to netrin. Axon repulsion in growth cones may be mediated by its association with DCC that may trigger signaling for repulsion. It also acts as a dependence receptor required for apoptosis induction when not associated with netrin ligand. This chain is Netrin receptor UNC5A (Unc5a), found in Mus musculus (Mouse).